The following is a 163-amino-acid chain: MALNLQDKQAIVAEVNEAAKGALSAVIADSRGVTVDKMTELRKAAREAGVSMRVVRNTLLRRAVEGTAFECLTDTFVGPTLIAFSNEHPGAAARLFKDFAKANDKFEIKGAAFEGKIQNVEFLATLPTYEEAIARLMGTMKEAAAGKLARTLAAYRDKLQEAA.

It belongs to the universal ribosomal protein uL10 family. Part of the ribosomal stalk of the 50S ribosomal subunit. The N-terminus interacts with L11 and the large rRNA to form the base of the stalk. The C-terminus forms an elongated spine to which L12 dimers bind in a sequential fashion forming a multimeric L10(L12)X complex.

Its function is as follows. Forms part of the ribosomal stalk, playing a central role in the interaction of the ribosome with GTP-bound translation factors. This Histophilus somni (strain 129Pt) (Haemophilus somnus) protein is Large ribosomal subunit protein uL10.